An 88-amino-acid polypeptide reads, in one-letter code: Small ribosomal subunit protein bS18 (88 aa).

It belongs to the bacterial ribosomal protein bS18 family. Part of the 30S ribosomal subunit. Forms a tight heterodimer with protein bS6.

Functionally, binds as a heterodimer with protein bS6 to the central domain of the 16S rRNA, where it helps stabilize the platform of the 30S subunit. The protein is Small ribosomal subunit protein bS18 of Aliarcobacter butzleri (strain RM4018) (Arcobacter butzleri).